The sequence spans 145 residues: tRNA-specific adenosine deaminase (145 aa).

Residues 1–116 form the CMP/dCMP-type deaminase domain; the sequence is MREALKQAEI…SNLRYFNSKA (116 aa). H48 lines the Zn(2+) pocket. The active-site Proton donor is E50. C78 and C81 together coordinate Zn(2+).

The protein belongs to the cytidine and deoxycytidylate deaminase family. As to quaternary structure, homodimer. The cofactor is Zn(2+).

It catalyses the reaction adenosine(34) in tRNA + H2O + H(+) = inosine(34) in tRNA + NH4(+). Its function is as follows. Catalyzes the deamination of adenosine to inosine at the wobble position 34 of tRNA(Arg2). This chain is tRNA-specific adenosine deaminase, found in Rickettsia bellii (strain RML369-C).